The primary structure comprises 314 residues: Malate dehydrogenase (314 aa).

Residues 11 to 16 (GSGNIG) and Asp-35 each bind NAD(+). Substrate contacts are provided by Arg-84 and Arg-90. Residues Asn-97 and 120–122 (ITN) each bind NAD(+). 2 residues coordinate substrate: Asn-122 and Arg-153. The active-site Proton acceptor is the His-177.

This sequence belongs to the LDH/MDH superfamily. MDH type 3 family.

The enzyme catalyses (S)-malate + NAD(+) = oxaloacetate + NADH + H(+). Catalyzes the reversible oxidation of malate to oxaloacetate. In Rickettsia bellii (strain RML369-C), this protein is Malate dehydrogenase.